Reading from the N-terminus, the 92-residue chain is Probable glutathione transferase (92 aa).

A GST N-terminal domain is found at 1 to 71 (RTCPYAQRAR…YLEEAFPDPP (71 aa)). The Nucleophile role is filled by cysteine 3. Residues lysine 30, valine 43, and 55 to 56 (ES) each bind glutathione.

It belongs to the GST superfamily. Omega family.

The catalysed reaction is RX + glutathione = an S-substituted glutathione + a halide anion + H(+). It carries out the reaction L-dehydroascorbate + 2 glutathione = glutathione disulfide + L-ascorbate. It catalyses the reaction methylarsonate + 2 glutathione + H(+) = methylarsonous acid + glutathione disulfide + H2O. Exhibits glutathione-dependent thiol transferase activity. Has dehydroascorbate reductase activity and may contribute to the recycling of ascorbic acid. Participates in the biotransformation of inorganic arsenic and reduces monomethylarsonic acid (MMA). This is Probable glutathione transferase from Aplysia californica (California sea hare).